The following is a 291-amino-acid chain: 4-diphosphocytidyl-2-C-methyl-D-erythritol kinase (291 aa).

The active site involves Lys-11. 94–104 (PAGSGLGGGSA) contacts ATP. Asp-136 is an active-site residue.

It belongs to the GHMP kinase family. IspE subfamily.

The enzyme catalyses 4-CDP-2-C-methyl-D-erythritol + ATP = 4-CDP-2-C-methyl-D-erythritol 2-phosphate + ADP + H(+). The protein operates within isoprenoid biosynthesis; isopentenyl diphosphate biosynthesis via DXP pathway; isopentenyl diphosphate from 1-deoxy-D-xylulose 5-phosphate: step 3/6. Its function is as follows. Catalyzes the phosphorylation of the position 2 hydroxy group of 4-diphosphocytidyl-2C-methyl-D-erythritol. The protein is 4-diphosphocytidyl-2-C-methyl-D-erythritol kinase of Treponema pallidum (strain Nichols).